The chain runs to 143 residues: Large ribosomal subunit protein uL15 (143 aa).

Positions 1–52 are disordered; that stretch reads MELNSIQPADGAKHYKRRVGRGIGSGLGKTSGRGHKGQKSRSGGFHKVGFEG. A compositionally biased stretch (gly residues) spans 21-31; it reads RGIGSGLGKTS.

The protein belongs to the universal ribosomal protein uL15 family. Part of the 50S ribosomal subunit.

Its function is as follows. Binds to the 23S rRNA. This is Large ribosomal subunit protein uL15 from Janthinobacterium sp. (strain Marseille) (Minibacterium massiliensis).